Reading from the N-terminus, the 141-residue chain is Large ribosomal subunit protein uL11 (141 aa).

This sequence belongs to the universal ribosomal protein uL11 family. As to quaternary structure, part of the ribosomal stalk of the 50S ribosomal subunit. Interacts with L10 and the large rRNA to form the base of the stalk. L10 forms an elongated spine to which L12 dimers bind in a sequential fashion forming a multimeric L10(L12)X complex. Post-translationally, one or more lysine residues are methylated.

Its function is as follows. Forms part of the ribosomal stalk which helps the ribosome interact with GTP-bound translation factors. The polypeptide is Large ribosomal subunit protein uL11 (Prosthecochloris aestuarii (strain DSM 271 / SK 413)).